Reading from the N-terminus, the 62-residue chain is Photosystem II reaction center protein Z (62 aa).

Transmembrane regions (helical) follow at residues 8-28 and 41-61; these read AVFA…VVFA and FSGT…NSLI.

This sequence belongs to the PsbZ family. PSII is composed of 1 copy each of membrane proteins PsbA, PsbB, PsbC, PsbD, PsbE, PsbF, PsbH, PsbI, PsbJ, PsbK, PsbL, PsbM, PsbT, PsbY, PsbZ, Psb30/Ycf12, at least 3 peripheral proteins of the oxygen-evolving complex and a large number of cofactors. It forms dimeric complexes.

The protein resides in the plastid. The protein localises to the chloroplast thylakoid membrane. May control the interaction of photosystem II (PSII) cores with the light-harvesting antenna, regulates electron flow through the 2 photosystem reaction centers. PSII is a light-driven water plastoquinone oxidoreductase, using light energy to abstract electrons from H(2)O, generating a proton gradient subsequently used for ATP formation. This Pisum sativum (Garden pea) protein is Photosystem II reaction center protein Z.